The primary structure comprises 795 residues: ATP-dependent RNA helicase DHX15 (795 aa).

Residues Met-1–Leu-111 are disordered. Ser-15 is subject to Phosphoserine. Residues Ala-20–Arg-62 are compositionally biased toward basic and acidic residues. Positions Ala-79 to Ser-110 are enriched in low complexity. Positions Thr-147 to Pro-313 constitute a Helicase ATP-binding domain. Gly-160 to Thr-167 contributes to the ATP binding site. The DEAH box signature appears at Asp-260 to His-263. In terms of domain architecture, Helicase C-terminal spans Thr-338–Gly-518. Lys-488 carries the N6-acetyllysine modification. Lys-786 participates in a covalent cross-link: Glycyl lysine isopeptide (Lys-Gly) (interchain with G-Cter in SUMO2).

It belongs to the DEAD box helicase family. DEAH subfamily. DDX15/PRP43 sub-subfamily. Component of the U11/U12 snRNPs that are part of the U12-type spliceosome. Identified in the Intron Large spliceosome complex (IL, also named intron lariat spliceosome), a post-mRNA release spliceosomal complex containing the excised intron, U2, U5 and U6 snRNPs, and splicing factors; the association may be transient. The IL complex exists in two distinct conformations, one with the DHX15 (ILS2) and one without (ILS1). Interacts with TFIP11 (via G-patch domain); indicative for a recruitment to the IL complex. Interacts with SSB/La. Interacts with GPATCH2 (via G-patch domain); promoting the RNA helicase activity. Interacts with NKRF (via G-patch domain); promoting the RNA helicase activity. Interacts with NLRP6. In terms of tissue distribution, ubiquitous.

It is found in the nucleus. The protein localises to the nucleolus. The enzyme catalyses ATP + H2O = ADP + phosphate + H(+). ATPase activity is enhanced upon binding to G-patch domain-containing proteins. G-patch domain-containing proteins act like a brace that tethers mobile sections of DHX15 together, stabilizing a functional conformation with high RNA affinity, thereby promoting the ATPase activity. Its function is as follows. RNA helicase involved in mRNA processing and antiviral innate immunity. Pre-mRNA processing factor involved in disassembly of spliceosomes after the release of mature mRNA. In cooperation with TFIP11 seem to be involved in the transition of the U2, U5 and U6 snRNP-containing IL complex to the snRNP-free IS complex leading to efficient debranching and turnover of excised introns. Plays a key role in antiviral innate immunity by promoting both MAVS-dependent signaling and NLRP6 inflammasome. Acts as an RNA virus sensor: recognizes and binds viral double stranded RNA (dsRNA) and activates the MAVS-dependent signaling to produce interferon-beta and interferon lambda-3 (IFNL3). Involved in intestinal antiviral innate immunity together with NLRP6: recognizes and binds viral dsRNA and promotes activation of the NLRP6 inflammasome in intestinal epithelial cells to restrict infection by enteric viruses. The NLRP6 inflammasome acts by promoting maturation and secretion of IL18 in the extracellular milieu. Also involved in antibacterial innate immunity by promoting Wnt-induced antimicrobial protein expression in Paneth cells. The polypeptide is ATP-dependent RNA helicase DHX15 (Mus musculus (Mouse)).